Reading from the N-terminus, the 306-residue chain is MNMKLKTLFAAAFAVVGFCSTASAVTYPLPTDGSRLVGQNQVITIPEGNTQPLEYFAAEYQMGLSNMMEANPGVDTFLPKGGTVLNIPQQLILPDTVHEGIVINSAEMRLYYYPKGTNTVIVLPIGIGQLGKDTPINWTTKVERKKAGPTWTPTAKMHAEYRAAGEPLPAVVPAGPDNPMGLYALYIGRLYAIHGTNANFGIGLRVSHGCVRLRNEDIKFLFEKVPVGTRVQFIDEPVKATTEPDGSRYIEVHNPLSTTEAQFEGQEIVPITLTKSVQTVTGQPDVDQVVLDEAIKNRSGMPVRLN.

Residues 1-24 form the signal peptide; sequence MNMKLKTLFAAAFAVVGFCSTASA. Positions 99–234 constitute a L,D-TPase catalytic domain; it reads EGIVINSAEM…VPVGTRVQFI (136 aa). Catalysis depends on His-194, which acts as the Proton donor/acceptor. The Nucleophile role is filled by Cys-210.

The protein belongs to the YkuD family.

It is found in the periplasm. Its pathway is cell wall biogenesis; peptidoglycan biosynthesis. In terms of biological role, responsible, at least in part, for anchoring of the major outer membrane lipoprotein (Lpp) to the peptidoglycan via a meso-diaminopimelyl-L-Lys- bond on the terminal residue of Lpp. The protein is Probable L,D-transpeptidase YbiS (ybiS) of Escherichia coli O6:H1 (strain CFT073 / ATCC 700928 / UPEC).